We begin with the raw amino-acid sequence, 228 residues long: Ribonuclease S-1 (228 aa).

The first 27 residues, 1–27, serve as a signal peptide directing secretion; that stretch reads MGVTGMTYMFTMVFSLIVLILSSSTVG. Residue Gln-36 participates in RNA binding. Cys-42 and Cys-49 form a disulfide bridge. Position 60 (His-60) interacts with RNA. The Proton donor role is filled by His-60. Residues Cys-75 and Cys-119 are joined by a disulfide bond. A glycan (N-linked (GlcNAc...) asparagine) is linked at Asn-87. 98 to 99 contacts RNA; it reads NV. N-linked (GlcNAc...) asparagine glycosylation occurs at Asn-101. RNA is bound by residues Phe-108, 111–112, and 115–116; these read KE and KH. The active site involves Glu-112. Residue His-116 is the Proton acceptor of the active site. 3 N-linked (GlcNAc...) asparagine glycosylation sites follow: Asn-144, Asn-157, and Asn-175. Disulfide bonds link Cys-183-Cys-222 and Cys-199-Cys-210.

This sequence belongs to the RNase T2 family. In terms of processing, N-linked core structure at Asn-87 and Asn-101 contains xylose and fucose or consists of disaccharide (GlcNAc-GlcNAc). N-linked core structure at Asn-144 contains xylose.

The enzyme catalyses a ribonucleotidyl-ribonucleotide-RNA + H2O = a 3'-end 3'-phospho-ribonucleotide-RNA + a 5'-end dephospho-ribonucleoside-RNA + H(+). Functionally, self-incompatibility (SI) is the inherited ability of a flowering plant to prevent self-fertilization by discriminating between self and non-self pollen during pollination. In many species, self-incompatibility is controlled by the single, multiallelic locus S. The protein is Ribonuclease S-1 of Pyrus pyrifolia (Chinese pear).